The sequence spans 116 residues: uncharacterized protein (116 aa).

The HTH cro/C1-type domain maps to 6-60 (LKKCRKQKKLTQQNMADKLGITRPAYTAYELGSREPDYKTLINISNILDVSLDYL). Positions 17–36 (QQNMADKLGITRPAYTAYEL) form a DNA-binding region, H-T-H motif.

This is an uncharacterized protein from Bacillus subtilis (strain 168).